Here is a 293-residue protein sequence, read N- to C-terminus: Pyridoxal 5'-phosphate synthase subunit PdxS (293 aa).

Asp-23 is a binding site for D-ribose 5-phosphate. Lys-80 (schiff-base intermediate with D-ribose 5-phosphate) is an active-site residue. Gly-152 provides a ligand contact to D-ribose 5-phosphate. Arg-164 contacts D-glyceraldehyde 3-phosphate. D-ribose 5-phosphate-binding positions include Gly-213 and 234 to 235 (GS).

Belongs to the PdxS/SNZ family. In terms of assembly, in the presence of PdxT, forms a dodecamer of heterodimers.

The catalysed reaction is aldehydo-D-ribose 5-phosphate + D-glyceraldehyde 3-phosphate + L-glutamine = pyridoxal 5'-phosphate + L-glutamate + phosphate + 3 H2O + H(+). The protein operates within cofactor biosynthesis; pyridoxal 5'-phosphate biosynthesis. Catalyzes the formation of pyridoxal 5'-phosphate from ribose 5-phosphate (RBP), glyceraldehyde 3-phosphate (G3P) and ammonia. The ammonia is provided by the PdxT subunit. Can also use ribulose 5-phosphate and dihydroxyacetone phosphate as substrates, resulting from enzyme-catalyzed isomerization of RBP and G3P, respectively. The chain is Pyridoxal 5'-phosphate synthase subunit PdxS from Methanothermobacter thermautotrophicus (strain ATCC 29096 / DSM 1053 / JCM 10044 / NBRC 100330 / Delta H) (Methanobacterium thermoautotrophicum).